The chain runs to 375 residues: Alanine racemase (375 aa).

K38 acts as the Proton acceptor; specific for D-alanine in catalysis. The residue at position 38 (K38) is an N6-(pyridoxal phosphate)lysine. Substrate is bound at residue R137. Residue Y266 is the Proton acceptor; specific for L-alanine of the active site. Residue M314 coordinates substrate.

This sequence belongs to the alanine racemase family. Pyridoxal 5'-phosphate is required as a cofactor.

The catalysed reaction is L-alanine = D-alanine. Its pathway is amino-acid biosynthesis; D-alanine biosynthesis; D-alanine from L-alanine: step 1/1. Functionally, catalyzes the interconversion of L-alanine and D-alanine. May also act on other amino acids. The protein is Alanine racemase (alr) of Cutibacterium acnes (strain DSM 16379 / KPA171202) (Propionibacterium acnes).